Reading from the N-terminus, the 237-residue chain is MQKQAELYRGKAKTVYSTENPDLLVLEFRNDTSAGDGARIEQFDRKGMVNNKFNHFIMSKLADAGIPTQMEALLSDTECLVKKLDMVPVECVVRNRAAGSLVKRLGIEEGIELNPPLFDLFLKNDEMHDPMVNESYCETFGWVSKENLARMQELTFKANDVLKKLFDDAGLILVDFKLEFGLYKGEVVLGDEFSPDGSRLWDKETLDKMDKDRFRQSLGGLIEAYEAVAHRLGVKLD.

The protein belongs to the SAICAR synthetase family.

The catalysed reaction is 5-amino-1-(5-phospho-D-ribosyl)imidazole-4-carboxylate + L-aspartate + ATP = (2S)-2-[5-amino-1-(5-phospho-beta-D-ribosyl)imidazole-4-carboxamido]succinate + ADP + phosphate + 2 H(+). The protein operates within purine metabolism; IMP biosynthesis via de novo pathway; 5-amino-1-(5-phospho-D-ribosyl)imidazole-4-carboxamide from 5-amino-1-(5-phospho-D-ribosyl)imidazole-4-carboxylate: step 1/2. This Enterobacter sp. (strain 638) protein is Phosphoribosylaminoimidazole-succinocarboxamide synthase.